We begin with the raw amino-acid sequence, 315 residues long: Aspartate carbamoyltransferase catalytic subunit (315 aa).

Residues Arg-64 and Thr-65 each coordinate carbamoyl phosphate. L-aspartate is bound at residue Lys-92. Positions 114, 142, and 145 each coordinate carbamoyl phosphate. L-aspartate-binding residues include Arg-175 and Arg-229. Carbamoyl phosphate contacts are provided by Gly-270 and Pro-271.

The protein belongs to the aspartate/ornithine carbamoyltransferase superfamily. ATCase family. Heterododecamer (2C3:3R2) of six catalytic PyrB chains organized as two trimers (C3), and six regulatory PyrI chains organized as three dimers (R2).

The enzyme catalyses carbamoyl phosphate + L-aspartate = N-carbamoyl-L-aspartate + phosphate + H(+). It functions in the pathway pyrimidine metabolism; UMP biosynthesis via de novo pathway; (S)-dihydroorotate from bicarbonate: step 2/3. Functionally, catalyzes the condensation of carbamoyl phosphate and aspartate to form carbamoyl aspartate and inorganic phosphate, the committed step in the de novo pyrimidine nucleotide biosynthesis pathway. This chain is Aspartate carbamoyltransferase catalytic subunit, found in Methylorubrum extorquens (strain CM4 / NCIMB 13688) (Methylobacterium extorquens).